The chain runs to 628 residues: 69 kDa protein (628 aa).

Disordered regions lie at residues 1–24 (MSNG…LSAS), 141–492 (HFHA…SDPV), and 537–628 (VLPT…PDTD). Composition is skewed to polar residues over residues 166–178 (RTSV…TTRG) and 295–305 (TGHIPSTTASR). Residues 433–451 (EGPPPPPRRLPSPATPPQS) show a composition bias toward pro residues. Over residues 586–596 (PSGPLRSQSPS) the composition is skewed to polar residues.

It belongs to the tymoviridae protein p69 family.

Functionally, acts as a suppressor of RNA-mediated gene silencing, also known as post-transcriptional gene silencing (PTGS), a mechanism of plant viral defense that limits the accumulation of viral RNAs. This is 69 kDa protein from Turnip yellow mosaic virus (isolate Australia).